The sequence spans 962 residues: Leucine--tRNA ligase (962 aa).

A 'HIGH' region motif is present at residues 40–51 (PYPSGAGLHVGH). The short motif at 737-741 (KMSKS) is the 'KMSKS' region element. Lys-740 is an ATP binding site.

Belongs to the class-I aminoacyl-tRNA synthetase family.

It is found in the cytoplasm. It catalyses the reaction tRNA(Leu) + L-leucine + ATP = L-leucyl-tRNA(Leu) + AMP + diphosphate. The polypeptide is Leucine--tRNA ligase (Flavobacterium psychrophilum (strain ATCC 49511 / DSM 21280 / CIP 103535 / JIP02/86)).